The primary structure comprises 93 residues: MLQVNEYFSGNVKSIGFDLADQRATVGVMAPGEYEFGTGAPELMVVIRGALTVQLPGATEWQTFSAGQEFNVPGNSKFQLKVATDTAYLCEYK.

Belongs to the nucleoside phosphorylase PpnP family.

The enzyme catalyses a purine D-ribonucleoside + phosphate = a purine nucleobase + alpha-D-ribose 1-phosphate. The catalysed reaction is adenosine + phosphate = alpha-D-ribose 1-phosphate + adenine. It catalyses the reaction cytidine + phosphate = cytosine + alpha-D-ribose 1-phosphate. It carries out the reaction guanosine + phosphate = alpha-D-ribose 1-phosphate + guanine. The enzyme catalyses inosine + phosphate = alpha-D-ribose 1-phosphate + hypoxanthine. The catalysed reaction is thymidine + phosphate = 2-deoxy-alpha-D-ribose 1-phosphate + thymine. It catalyses the reaction uridine + phosphate = alpha-D-ribose 1-phosphate + uracil. It carries out the reaction xanthosine + phosphate = alpha-D-ribose 1-phosphate + xanthine. Functionally, catalyzes the phosphorolysis of diverse nucleosides, yielding D-ribose 1-phosphate and the respective free bases. Can use uridine, adenosine, guanosine, cytidine, thymidine, inosine and xanthosine as substrates. Also catalyzes the reverse reactions. This is Pyrimidine/purine nucleoside phosphorylase from Tolumonas auensis (strain DSM 9187 / NBRC 110442 / TA 4).